The sequence spans 229 residues: UPF0441 protein YE3666 (229 aa).

Disordered stretches follow at residues 101-125 and 190-229; these read PAQAGMVPTSSSSSETTAAAPQQSG and KPAVTNTITRGGFGESVAKQSSMQRSAATSSKTSTRSMGG. Low complexity-rich tracts occupy residues 109 to 120 and 214 to 229; these read TSSSSSETTAAA and RSAATSSKTSTRSMGG.

It belongs to the UPF0441 family.

The chain is UPF0441 protein YE3666 from Yersinia enterocolitica serotype O:8 / biotype 1B (strain NCTC 13174 / 8081).